The primary structure comprises 1454 residues: E3 ubiquitin-protein ligase substrate receptor MMS22 (1454 aa).

The interval 159-178 is disordered; the sequence is NSSVQSQRYDSDEEIPKKRH. The segment at 1201-1454 is required for interaction with MMS1; the sequence is YDEGDISRNF…SEPFKTFKNT (254 aa).

This sequence belongs to the MMS22 family. In terms of assembly, component of a cullin-RING ligase (CRL) composed of 4 subunits: the RING protein HRT1, the cullin RTT101, a linker protein MMS1, and the substrate receptor MMS22. This complex further interacts with RTT107 and CTF4 to form RTT101-MMS1-MMS22-RTT107 and RTT101-MMS1-MMS22-CTF4 complexes respectively. Interacts (via C-ter) with MMS1 (via N-ter). Interacts with RTT107.

It localises to the nucleus. Its function is as follows. Substrate targeting component of a cullin-RING-based E3 ubiquitin-protein ligase complex RTT101(MMS1-MMS22). RTT101(MMS1-MMS22) promotes fork progression through damaged DNA or natural pause sites by stabilizing replication proteins like the replication fork-pausing complex (FPC) and leading-strand polymerase at stalled replication forks. RTT101(MMS1-MMS22) ubiquitinates the acetylated histones H3K56ac-H4 at lysine residues H3K121, H3K122 and H3K125. Ubiquitination is required for efficient histone deposition during replication-coupled nucleosome assembly, probably by facilitating the transfer of H3-H4 from ASF1 to other chaperones involved in histone deposition. The polypeptide is E3 ubiquitin-protein ligase substrate receptor MMS22 (MMS22) (Saccharomyces cerevisiae (strain ATCC 204508 / S288c) (Baker's yeast)).